The sequence spans 203 residues: ATP-dependent Clp protease proteolytic subunit 2 (203 aa).

Ser-98 (nucleophile) is an active-site residue. His-123 is an active-site residue.

The protein belongs to the peptidase S14 family. As to quaternary structure, fourteen ClpP subunits assemble into 2 heptameric rings which stack back to back to give a disk-like structure with a central cavity, resembling the structure of eukaryotic proteasomes.

The protein localises to the cytoplasm. It carries out the reaction Hydrolysis of proteins to small peptides in the presence of ATP and magnesium. alpha-casein is the usual test substrate. In the absence of ATP, only oligopeptides shorter than five residues are hydrolyzed (such as succinyl-Leu-Tyr-|-NHMec, and Leu-Tyr-Leu-|-Tyr-Trp, in which cleavage of the -Tyr-|-Leu- and -Tyr-|-Trp bonds also occurs).. Its function is as follows. Cleaves peptides in various proteins in a process that requires ATP hydrolysis. Has a chymotrypsin-like activity. Plays a major role in the degradation of misfolded proteins. This is ATP-dependent Clp protease proteolytic subunit 2 from Chlamydia pneumoniae (Chlamydophila pneumoniae).